We begin with the raw amino-acid sequence, 1186 residues long: ATP-dependent helicase/nuclease subunit A (1186 aa).

The 459-residue stretch at 2 to 460 folds into the UvrD-like helicase ATP-binding domain; sequence NFSKNQRAVI…IELSENYRSQ (459 aa). 23-30 contacts ATP; it reads ASAGSGKT. A UvrD-like helicase C-terminal domain is found at 487 to 771; that stretch reads DVELKAANRD…SVMTIHAAKG (285 aa).

It belongs to the helicase family. AddA subfamily. In terms of assembly, heterodimer of AddA and AddB/RexB. The cofactor is Mg(2+).

It carries out the reaction Couples ATP hydrolysis with the unwinding of duplex DNA by translocating in the 3'-5' direction.. The catalysed reaction is ATP + H2O = ADP + phosphate + H(+). Functionally, the heterodimer acts as both an ATP-dependent DNA helicase and an ATP-dependent, dual-direction single-stranded exonuclease. Recognizes the chi site generating a DNA molecule suitable for the initiation of homologous recombination. The AddA nuclease domain is required for chi fragment generation; this subunit has the helicase and 3' -&gt; 5' nuclease activities. This chain is ATP-dependent helicase/nuclease subunit A, found in Oenococcus oeni (strain ATCC BAA-331 / PSU-1).